We begin with the raw amino-acid sequence, 108 residues long: MNYMKFMWNSEDGFIVEEQHKEEIPFEDWIVNTVEQLKNLQYTRYTFEELTPKTKNLEAYNKLLEILKKHTNMDIENNVKRIYHCIAENNNYKYEIAFYIVISKNWNE.

This is an uncharacterized protein from Methanocaldococcus jannaschii (strain ATCC 43067 / DSM 2661 / JAL-1 / JCM 10045 / NBRC 100440) (Methanococcus jannaschii).